A 406-amino-acid polypeptide reads, in one-letter code: Tryptophan synthase beta chain (406 aa).

Lys-99 carries the N6-(pyridoxal phosphate)lysine modification.

It belongs to the TrpB family. Tetramer of two alpha and two beta chains. Requires pyridoxal 5'-phosphate as cofactor.

It carries out the reaction (1S,2R)-1-C-(indol-3-yl)glycerol 3-phosphate + L-serine = D-glyceraldehyde 3-phosphate + L-tryptophan + H2O. The protein operates within amino-acid biosynthesis; L-tryptophan biosynthesis; L-tryptophan from chorismate: step 5/5. In terms of biological role, the beta subunit is responsible for the synthesis of L-tryptophan from indole and L-serine. Essential for production of nod factors and establishment of symbiosis. This is Tryptophan synthase beta chain from Rhizobium etli (strain ATCC 51251 / DSM 11541 / JCM 21823 / NBRC 15573 / CFN 42).